Consider the following 116-residue polypeptide: Large ribosomal subunit protein bL17 (116 aa).

The protein belongs to the bacterial ribosomal protein bL17 family. Part of the 50S ribosomal subunit. Contacts protein L32.

This chain is Large ribosomal subunit protein bL17, found in Prochlorococcus marinus (strain NATL2A).